We begin with the raw amino-acid sequence, 383 residues long: MVVTFLQDLEVLQDALLNNLQKLSAISRRKESGESKHDNKDSFAAIANEHNDEEEEIEFEDLVNIIESKVSDFESVLKCSIVEMTYKYPELKLQWEKSPRYDQCDKLHIVKLDKQMNEDIYAQLVEELDFVLQFVDWFYCYRLKVKEILRQHHKRDLAWNDEKRDRAIKFHAVDYDKLHQGTSSSSSLTSTSMEKASTREKLLSKTKQLTNNLVRGNQILQSGILQSDLNLDELRAQTNSLTQIDDKYTQFETVFKKTADLVKVLENASHQEKRDVYLSLGFLLCCVSWVLWRRIFKLPVKLGLWLLFKFFKGILVTLGLVKSYAGSSSSLQAPSLVLNAPILATTTTSSATSVEPFASVSAVSSIQRAVDEAVDRIVSHDEL.

Residues 1–275 (MVVTFLQDLE…ENASHQEKRD (275 aa)) are Cytoplasmic-facing. Positions 6-26 (LQDLEVLQDALLNNLQKLSAI) form a coiled coil. Residues 276 to 292 (VYLSLGFLLCCVSWVLW) traverse the membrane as a helical; Anchor for type IV membrane protein segment. The Lumenal portion of the chain corresponds to 293 to 383 (RRIFKLPVKL…VDRIVSHDEL (91 aa)). The short motif at 380–383 (HDEL) is the Prevents secretion from ER element.

It belongs to the SEC20 family. Component of a SNARE complex consisting of UFE1, USE1, SEC20 and SEC22 or YKT6. Interacts with TIP20 through its cytoplasmic domain. Post-translationally, O-glycosylated, but not N-glycosylated.

The protein localises to the endoplasmic reticulum membrane. Its function is as follows. SNARE required for targeting and fusion of Golgi-derived retrograde transport vesicles with the ER. This Saccharomyces cerevisiae (strain ATCC 204508 / S288c) (Baker's yeast) protein is Protein transport protein SEC20 (SEC20).